Reading from the N-terminus, the 747-residue chain is ATP-dependent DNA helicase Hel308 (747 aa).

ATP-binding positions include Gln29 and 47-54 (VPTASGKT). The 167-residue stretch at 34 to 200 (DAGVADGESL…WLDAELVDSS (167 aa)) folds into the Helicase ATP-binding domain. The short motif at 145 to 148 (DEVH) is the DEAH box element. Positions 234–434 (PTEAVVRETL…REPSMRTHLL (201 aa)) constitute a Helicase C-terminal domain. Positions 711-747 (AAGHQQPEMDGVTPDADVKESAAAAGTDDGQANLGDF) are disordered.

This sequence belongs to the helicase family. Hel308 subfamily. As to quaternary structure, monomer.

The catalysed reaction is Couples ATP hydrolysis with the unwinding of duplex DNA by translocating in the 3'-5' direction.. It catalyses the reaction ATP + H2O = ADP + phosphate + H(+). Functionally, DNA-dependent ATPase and 3'-5' DNA helicase that may be involved in repair of stalled replication forks. This Natronomonas pharaonis (strain ATCC 35678 / DSM 2160 / CIP 103997 / JCM 8858 / NBRC 14720 / NCIMB 2260 / Gabara) (Halobacterium pharaonis) protein is ATP-dependent DNA helicase Hel308.